A 322-amino-acid chain; its full sequence is uncharacterized protein (322 aa).

The segment at 269–289 (QDEEEEPRDERRPRRRLGKAQ) is disordered.

This is an uncharacterized protein from Sinorhizobium fredii (strain NBRC 101917 / NGR234).